Here is a 426-residue protein sequence, read N- to C-terminus: Enolase (426 aa).

Residue glutamine 163 participates in (2R)-2-phosphoglycerate binding. Glutamate 205 (proton donor) is an active-site residue. Aspartate 242, glutamate 285, and aspartate 312 together coordinate Mg(2+). Lysine 337, arginine 366, serine 367, and lysine 388 together coordinate (2R)-2-phosphoglycerate. Lysine 337 (proton acceptor) is an active-site residue.

This sequence belongs to the enolase family. It depends on Mg(2+) as a cofactor.

Its subcellular location is the cytoplasm. It localises to the secreted. The protein resides in the cell surface. The enzyme catalyses (2R)-2-phosphoglycerate = phosphoenolpyruvate + H2O. Its pathway is carbohydrate degradation; glycolysis; pyruvate from D-glyceraldehyde 3-phosphate: step 4/5. Catalyzes the reversible conversion of 2-phosphoglycerate (2-PG) into phosphoenolpyruvate (PEP). It is essential for the degradation of carbohydrates via glycolysis. This chain is Enolase, found in Desulfosudis oleivorans (strain DSM 6200 / JCM 39069 / Hxd3) (Desulfococcus oleovorans).